Consider the following 123-residue polypeptide: Venom protein 29 (123 aa).

The N-terminal stretch at 1–18 is a signal peptide; it reads MNKLFLFTLLVTLWSVKG.

Post-translationally, contains 3 disulfide bonds. In terms of tissue distribution, expressed by the venom gland.

It is found in the secreted. This is Venom protein 29 from Lychas mucronatus (Chinese swimming scorpion).